We begin with the raw amino-acid sequence, 179 residues long: uncharacterized protein (179 aa).

The segment at 27–54 (TAKKSRVQAREARAAVEENKKAQLERDK) is disordered.

This is an uncharacterized protein from Escherichia coli (strain K12).